Reading from the N-terminus, the 175-residue chain is Dual-action ribosomal maturation protein DarP (175 aa).

The protein belongs to the DarP family.

The protein resides in the cytoplasm. Member of a network of 50S ribosomal subunit biogenesis factors which assembles along the 30S-50S interface, preventing incorrect 23S rRNA structures from forming. Promotes peptidyl transferase center (PTC) maturation. The protein is Dual-action ribosomal maturation protein DarP of Vibrio parahaemolyticus serotype O3:K6 (strain RIMD 2210633).